The following is a 537-amino-acid chain: Immunoglobulin-like domain-containing receptor 1 (537 aa).

Positions 1-22 (MGCGLLAAGLLLFTWLPAGCLS) are cleaved as a signal peptide. Residues 23–161 (LLVTVQHTER…TSGDPDKEVK (139 aa)) enclose the Ig-like V-type domain. At 23 to 166 (LLVTVQHTER…DKEVKLIVLH (144 aa)) the chain is on the extracellular side. Cys-44 and Cys-144 are disulfide-bonded. A helical membrane pass occupies residues 167-187 (WLTVIFIILGALLLLLLIGVC). Residues 188-537 (WCQCCPQYCC…SSHSGRSVVI (350 aa)) lie on the Cytoplasmic side of the membrane. The segment at 333-537 (PPLIRDPPSS…SSHSGRSVVI (205 aa)) is disordered. Residues 341 to 357 (SSRTSNPSHQQRLNAVS) show a composition bias toward polar residues. 2 stretches are compositionally biased toward basic and acidic residues: residues 359 to 380 (RHCD…RELQ) and 434 to 444 (RRPEPREGAQR). The span at 480–490 (QRRHHHRRRRS) shows a compositional bias: basic residues. 2 positions are modified to phosphoserine: Ser-490 and Ser-492. Positions 518 to 530 (GNVERRLERESSH) are enriched in basic and acidic residues.

The protein belongs to the immunoglobulin superfamily. LISCH7 family. Homooligomer. Interacts with MARVELD2 and OCLN; the interaction is required to recruit MARVELD2 to tricellular contacts. Interacts (via C-terminus) with TRA2A, TRA2B and SRSF1. Interacts with PLSCR1. Expressed in the vestibule and in hair cells and supporting cells of the cochlea. Expressed in epithelial tissues. Highly expressed in colon but also detected in small intestine, bladder and lung. In colon, expressed in the upper portion of the crypts (at protein level). Expressed in CCK secretory cells of the proximal small intestine (at protein level). Expressed in the organ of Corti, stria vascularis, utricle and saccule of the inner ear.

The protein resides in the cell membrane. It is found in the cell junction. The protein localises to the tight junction. Its subcellular location is the nucleus. It localises to the cytoplasm. Maintains epithelial barrier function by recruiting MARVELD2/tricellulin to tricellular tight junctions (tTJs). Crucial for normal hearing by maintaining the structural and functional integrity of tTJs, which are critical for the survival of auditory neurosensory HCs. Mediates fatty acids and lipoproteins-stimulated CCK/cholecystokinin secretion in the small intestine. In the inner ear, may regulate alternative pre-mRNA splicing via binding to TRA2A, TRA2B and SRSF1. The sequence is that of Immunoglobulin-like domain-containing receptor 1 from Mus musculus (Mouse).